A 135-amino-acid chain; its full sequence is Large ribosomal subunit protein uL16c (135 aa).

The protein belongs to the universal ribosomal protein uL16 family. In terms of assembly, part of the 50S ribosomal subunit.

The protein localises to the plastid. It localises to the chloroplast. This chain is Large ribosomal subunit protein uL16c, found in Jasminum nudiflorum (Winter jasmine).